The chain runs to 351 residues: uncharacterized protein (351 aa).

Mn(2+) is bound by residues Asp-215, Asp-226, His-290, Glu-319, and Glu-333.

The protein belongs to the peptidase M24B family. Mn(2+) is required as a cofactor.

This is an uncharacterized protein from Staphylococcus aureus (strain bovine RF122 / ET3-1).